The primary structure comprises 356 residues: 4-hydroxy-3-methylbut-2-en-1-yl diphosphate synthase (flavodoxin) (356 aa).

[4Fe-4S] cluster-binding residues include Cys-264, Cys-267, Cys-299, and Glu-306.

This sequence belongs to the IspG family. Requires [4Fe-4S] cluster as cofactor.

The catalysed reaction is (2E)-4-hydroxy-3-methylbut-2-enyl diphosphate + oxidized [flavodoxin] + H2O + 2 H(+) = 2-C-methyl-D-erythritol 2,4-cyclic diphosphate + reduced [flavodoxin]. Its pathway is isoprenoid biosynthesis; isopentenyl diphosphate biosynthesis via DXP pathway; isopentenyl diphosphate from 1-deoxy-D-xylulose 5-phosphate: step 5/6. Converts 2C-methyl-D-erythritol 2,4-cyclodiphosphate (ME-2,4cPP) into 1-hydroxy-2-methyl-2-(E)-butenyl 4-diphosphate. This Campylobacter lari (strain RM2100 / D67 / ATCC BAA-1060) protein is 4-hydroxy-3-methylbut-2-en-1-yl diphosphate synthase (flavodoxin).